The primary structure comprises 604 residues: Polycomb group protein EMF2B (604 aa).

The C2H2-type zinc-finger motif lies at 310–331; sequence CPFCLVPCGSFKGLGCHLNASH. Positions 396 to 440 are disordered; it reads PHIVDSGSPEDAQAGSEDDYVQRENGSSVAHASVDPANSLHGSNL. The VEFS-box stretch occupies residues 454-589; sequence LSVERADPRN…DARAMNACNT (136 aa).

The protein belongs to the VEFS (VRN2-EMF2-FIS2-SU(Z)12) family. In terms of assembly, component of the polycomb repressive complex 2 (PRC2), composed of the core PRC2 components FIE2, EZ1 and CLF. PRC2 methylates 'Lys-27' residues of histone H3 (H3K27me3), leading to transcriptional repression of the affected target gene. Widely expressed.

Functionally, polycomb group (PcG) protein. PcG proteins act by forming multiprotein complexes, which are required to maintain the transcriptionally repressive state of homeotic genes throughout development. PcG proteins are not required to initiate repression, but to maintain it during later stages of development. They act via the methylation of histones, rendering chromatin heritably changed in its expressibility. Polycomb group (PcG) protein involved in the repression of flowering under long day (LD) conditions. Regulates floret development. In Oryza sativa subsp. japonica (Rice), this protein is Polycomb group protein EMF2B.